The chain runs to 139 residues: Nucleoside diphosphate kinase (139 aa).

ATP-binding residues include Lys11, Phe59, Arg87, Thr93, Arg104, and Asn114. Residue His117 is the Pros-phosphohistidine intermediate of the active site.

The protein belongs to the NDK family. In terms of assembly, homotetramer. The cofactor is Mg(2+).

The protein localises to the cytoplasm. It catalyses the reaction a 2'-deoxyribonucleoside 5'-diphosphate + ATP = a 2'-deoxyribonucleoside 5'-triphosphate + ADP. It carries out the reaction a ribonucleoside 5'-diphosphate + ATP = a ribonucleoside 5'-triphosphate + ADP. Major role in the synthesis of nucleoside triphosphates other than ATP. The ATP gamma phosphate is transferred to the NDP beta phosphate via a ping-pong mechanism, using a phosphorylated active-site intermediate. This chain is Nucleoside diphosphate kinase, found in Wolbachia pipientis wMel.